Here is a 56-residue protein sequence, read N- to C-terminus: Alpha-conotoxin Pn1.2 (56 aa).

The N-terminal stretch at 1 to 16 (MFTVFLLVVLATTVVS) is a signal peptide. The propeptide occupies 17-39 (FTSDRASDGGNAAMSDLIALTIK). 2 cysteine pairs are disulfide-bonded: cysteine 41–cysteine 47 and cysteine 42–cysteine 55. The tract at residues 43 to 45 (SHP) is ser-Xaa-Pro motif, crucial for potent interaction with nAChR. A Cysteine amide modification is found at cysteine 55.

The protein belongs to the conotoxin A superfamily. In terms of processing, non-native isomers 'ribbon' (with disulfide connectivity C1-C4; C2-C3) and 'beads' (with disulfide connectivity C1-C2; C3-C4) also inhibit high voltage-activated (HVA) calcium channel currents in rat DRG neurons (20-30% inhibition at 1 uM toxin). In terms of tissue distribution, expressed by the venom duct.

It localises to the secreted. Alpha-conotoxins act on postsynaptic membranes, they bind to the nicotinic acetylcholine receptors (nAChR) and thus inhibit them. This toxin inhibits human alpha-7/CHRNA7 and alpha-9-alpha-10/CHRNA9/CHRNA10 AChR (complete inhibition at 3 uM of toxin). In addition, this toxin inhibits high voltage-activated (HVA) calcium channel currents in rat DRG neurons (22% inhibition at 1 uM toxin) probably by activating GABA(B) receptors (GABBR1 and/or GABBR2). This chain is Alpha-conotoxin Pn1.2, found in Conus pennaceus (Feathered cone).